A 183-amino-acid polypeptide reads, in one-letter code: Bifunctional protein PyrR (183 aa).

Residues 102–114 carry the PRPP-binding motif; that stretch reads VVLVDDVLYTGRT.

Belongs to the purine/pyrimidine phosphoribosyltransferase family. PyrR subfamily. In terms of assembly, homodimer and homohexamer; in equilibrium.

The enzyme catalyses UMP + diphosphate = 5-phospho-alpha-D-ribose 1-diphosphate + uracil. Regulates transcriptional attenuation of the pyrimidine nucleotide (pyr) operon by binding in a uridine-dependent manner to specific sites on pyr mRNA. This disrupts an antiterminator hairpin in the RNA and favors formation of a downstream transcription terminator, leading to a reduced expression of downstream genes. Functionally, also displays a weak uracil phosphoribosyltransferase activity which is not physiologically significant. In Listeria welshimeri serovar 6b (strain ATCC 35897 / DSM 20650 / CCUG 15529 / CIP 8149 / NCTC 11857 / SLCC 5334 / V8), this protein is Bifunctional protein PyrR.